A 364-amino-acid chain; its full sequence is Dihydroorotate dehydrogenase (quinone) (364 aa).

FMN-binding positions include 61–65 (AGFDK) and Ser85. Lys65 provides a ligand contact to substrate. Residue 110 to 114 (NRMGF) coordinates substrate. Positions 139 and 170 each coordinate FMN. Residue Asn170 coordinates substrate. Catalysis depends on Ser173, which acts as the Nucleophile. Residue Asn175 coordinates substrate. The FMN site is built by Lys214 and Ser242. Residue 243 to 244 (NT) coordinates substrate. Residues Gly266, Gly295, and 316–317 (YS) each bind FMN.

Belongs to the dihydroorotate dehydrogenase family. Type 2 subfamily. As to quaternary structure, monomer. The cofactor is FMN.

It localises to the cell membrane. The enzyme catalyses (S)-dihydroorotate + a quinone = orotate + a quinol. It functions in the pathway pyrimidine metabolism; UMP biosynthesis via de novo pathway; orotate from (S)-dihydroorotate (quinone route): step 1/1. Its function is as follows. Catalyzes the conversion of dihydroorotate to orotate with quinone as electron acceptor. The protein is Dihydroorotate dehydrogenase (quinone) of Bradyrhizobium sp. (strain BTAi1 / ATCC BAA-1182).